A 130-amino-acid polypeptide reads, in one-letter code: Phosphoribosyl-AMP cyclohydrolase (130 aa).

Asp80 contributes to the Mg(2+) binding site. Residue Cys81 participates in Zn(2+) binding. Residues Asp82 and Asp84 each coordinate Mg(2+). Zn(2+) is bound by residues Cys98 and Cys105.

This sequence belongs to the PRA-CH family. As to quaternary structure, homodimer. It depends on Mg(2+) as a cofactor. Requires Zn(2+) as cofactor.

Its subcellular location is the cytoplasm. The catalysed reaction is 1-(5-phospho-beta-D-ribosyl)-5'-AMP + H2O = 1-(5-phospho-beta-D-ribosyl)-5-[(5-phospho-beta-D-ribosylamino)methylideneamino]imidazole-4-carboxamide. The protein operates within amino-acid biosynthesis; L-histidine biosynthesis; L-histidine from 5-phospho-alpha-D-ribose 1-diphosphate: step 3/9. Its function is as follows. Catalyzes the hydrolysis of the adenine ring of phosphoribosyl-AMP. The protein is Phosphoribosyl-AMP cyclohydrolase of Oleidesulfovibrio alaskensis (strain ATCC BAA-1058 / DSM 17464 / G20) (Desulfovibrio alaskensis).